The primary structure comprises 488 residues: Protein nucleotidyltransferase YdiU (488 aa).

Residues Gly-91, Gly-93, Arg-94, Lys-114, Asp-126, Gly-127, Arg-177, and Arg-184 each coordinate ATP. Residues Arg-108–Gly-127 form a disordered region. The active-site Proton acceptor is Asp-253. 2 residues coordinate Mg(2+): Asn-254 and Asp-263. ATP is bound at residue Asp-263.

This sequence belongs to the SELO family. Mg(2+) is required as a cofactor. Requires Mn(2+) as cofactor.

It carries out the reaction L-seryl-[protein] + ATP = 3-O-(5'-adenylyl)-L-seryl-[protein] + diphosphate. The catalysed reaction is L-threonyl-[protein] + ATP = 3-O-(5'-adenylyl)-L-threonyl-[protein] + diphosphate. The enzyme catalyses L-tyrosyl-[protein] + ATP = O-(5'-adenylyl)-L-tyrosyl-[protein] + diphosphate. It catalyses the reaction L-histidyl-[protein] + UTP = N(tele)-(5'-uridylyl)-L-histidyl-[protein] + diphosphate. It carries out the reaction L-seryl-[protein] + UTP = O-(5'-uridylyl)-L-seryl-[protein] + diphosphate. The catalysed reaction is L-tyrosyl-[protein] + UTP = O-(5'-uridylyl)-L-tyrosyl-[protein] + diphosphate. Functionally, nucleotidyltransferase involved in the post-translational modification of proteins. It can catalyze the addition of adenosine monophosphate (AMP) or uridine monophosphate (UMP) to a protein, resulting in modifications known as AMPylation and UMPylation. The chain is Protein nucleotidyltransferase YdiU from Bacillus cereus (strain AH820).